The following is a 182-amino-acid chain: Large ribosomal subunit protein uL16 (182 aa).

It belongs to the universal ribosomal protein uL16 family.

This Pyrobaculum neutrophilum (strain DSM 2338 / JCM 9278 / NBRC 100436 / V24Sta) (Thermoproteus neutrophilus) protein is Large ribosomal subunit protein uL16.